Here is a 1156-residue protein sequence, read N- to C-terminus: Chromosome partition protein Smc (1156 aa).

37–44 serves as a coordination point for ATP; it reads PNGAGKSN. Residues 167-499 are a coiled coil; the sequence is SGIGEYERKK…AIEREVRSFS (333 aa). An SMC hinge domain is found at 509-624; that stretch reads KGVYGSVSEL…VENFESAKAI (116 aa). Residues 654–1001 are a coiled coil; it reads GELNKRYYEE…EETENKKRKV (348 aa).

This sequence belongs to the SMC family. Homodimer.

It localises to the cytoplasm. In terms of biological role, required for chromosome condensation and partitioning. This chain is Chromosome partition protein Smc, found in Aquifex aeolicus (strain VF5).